A 487-amino-acid chain; its full sequence is N-succinylglutamate 5-semialdehyde dehydrogenase (487 aa).

Residue 221-226 coordinates NAD(+); sequence GSSRTG. Residues Glu-244 and Cys-278 contribute to the active site.

It belongs to the aldehyde dehydrogenase family. AstD subfamily.

It catalyses the reaction N-succinyl-L-glutamate 5-semialdehyde + NAD(+) + H2O = N-succinyl-L-glutamate + NADH + 2 H(+). Its pathway is amino-acid degradation; L-arginine degradation via AST pathway; L-glutamate and succinate from L-arginine: step 4/5. Catalyzes the NAD-dependent reduction of succinylglutamate semialdehyde into succinylglutamate. The chain is N-succinylglutamate 5-semialdehyde dehydrogenase from Pseudomonas putida (strain GB-1).